An 85-amino-acid chain; its full sequence is Putative regulatory protein Dtur_1444 (85 aa).

This sequence belongs to the RemA family.

In Dictyoglomus turgidum (strain DSM 6724 / Z-1310), this protein is Putative regulatory protein Dtur_1444.